The following is a 144-amino-acid chain: Leghemoglobin-1 (144 aa).

A Globin domain is found at 2 to 144 (GFTEKQEALV…DGLATAIKAA (143 aa)). Residues Tyr-25 and Tyr-30 each carry the nitrated tyrosine modification. Ser-45 contributes to the heme b binding site. Position 45 is a phosphoserine (Ser-45). Position 62 (His-62) interacts with O2. The heme b site is built by Lys-65, His-93, and Lys-96. At Tyr-134 the chain carries Nitrated tyrosine.

This sequence belongs to the plant globin family. Monomer. In terms of processing, nitrated in effective nodules and particularly in hypoxic conditions; this mechanism may play a protective role in the symbiosis by buffering toxic peroxynitrite NO(2)(-). Nitration level decrease during nodule senescence. Post-translationally, phosphorylation at Ser-45 disrupts the molecular environment of its porphyrin ring oxygen binding pocket, thus leading to a reduced oxygen consumption and to the delivery of oxygen O(2) to symbiosomes. In terms of tissue distribution, root nodules.

It is found in the cytoplasm. The protein localises to the cytosol. It localises to the nucleus. In terms of biological role, leghemoglobin that reversibly binds oxygen O(2) through a pentacoordinated heme iron. In root nodules, facilitates the diffusion of oxygen to the bacteroids while preventing the bacterial nitrogenase from being inactivated by buffering dioxygen, nitric oxide and carbon monoxide, and promoting the formation of reactive oxygen species (ROS, e.g. H(2)O(2)). This role is essential for symbiotic nitrogen fixation (SNF). This Vicia faba (Broad bean) protein is Leghemoglobin-1.